Here is a 341-residue protein sequence, read N- to C-terminus: Heat-inducible transcription repressor HrcA (341 aa).

Belongs to the HrcA family.

Negative regulator of class I heat shock genes (grpE-dnaK-dnaJ and groELS operons). Prevents heat-shock induction of these operons. The chain is Heat-inducible transcription repressor HrcA from Mycobacteroides abscessus (strain ATCC 19977 / DSM 44196 / CCUG 20993 / CIP 104536 / JCM 13569 / NCTC 13031 / TMC 1543 / L948) (Mycobacterium abscessus).